Here is a 96-residue protein sequence, read N- to C-terminus: Co-chaperonin GroES (96 aa).

This sequence belongs to the GroES chaperonin family. Heptamer of 7 subunits arranged in a ring. Interacts with the chaperonin GroEL.

The protein resides in the cytoplasm. In terms of biological role, together with the chaperonin GroEL, plays an essential role in assisting protein folding. The GroEL-GroES system forms a nano-cage that allows encapsulation of the non-native substrate proteins and provides a physical environment optimized to promote and accelerate protein folding. GroES binds to the apical surface of the GroEL ring, thereby capping the opening of the GroEL channel. In Methylorubrum populi (strain ATCC BAA-705 / NCIMB 13946 / BJ001) (Methylobacterium populi), this protein is Co-chaperonin GroES.